Here is a 292-residue protein sequence, read N- to C-terminus: Fat storage-inducing transmembrane protein 1 (292 aa).

The Lumenal segment spans residues M1–Q18. The helical transmembrane segment at A19 to G39 threads the bilayer. The Cytoplasmic portion of the chain corresponds to S40–R54. Residues L55–N75 traverse the membrane as a helical segment. Residues P76–S94 are Lumenal-facing. A helical membrane pass occupies residues A95–T115. Over R116–A141 the chain is Cytoplasmic. A helical transmembrane segment spans residues F142 to L162. Residues H163 to T187 lie on the Lumenal side of the membrane. H186 is an active-site residue. The chain crosses the membrane as a helical span at residues F188–L208. Over A209–L220 the chain is Cytoplasmic. The chain crosses the membrane as a helical span at residues V221 to I241. At Y242–K249 the chain is on the lumenal side. H244 is a catalytic residue. A helical transmembrane segment spans residues V250–Q270. Over P271–N292 the chain is Cytoplasmic.

It belongs to the FIT family. FIT1 subfamily. Primarily expressed in heart and skeletal muscle.

The protein resides in the endoplasmic reticulum membrane. Plays an important role in the formation of lipid droplets (LDs) which are storage organelles at the center of lipid and energy homeostasis. Directly binds to diacylglycerol (DAGs) and triacylglycerol. The chain is Fat storage-inducing transmembrane protein 1 from Homo sapiens (Human).